A 193-amino-acid chain; its full sequence is Acyl carrier protein phosphodiesterase (193 aa).

Belongs to the AcpH family.

It carries out the reaction holo-[ACP] + H2O = apo-[ACP] + (R)-4'-phosphopantetheine + H(+). In terms of biological role, converts holo-ACP to apo-ACP by hydrolytic cleavage of the phosphopantetheine prosthetic group from ACP. This Pectobacterium atrosepticum (strain SCRI 1043 / ATCC BAA-672) (Erwinia carotovora subsp. atroseptica) protein is Acyl carrier protein phosphodiesterase.